Here is a 332-residue protein sequence, read N- to C-terminus: GTP 3',8-cyclase (332 aa).

The Radical SAM core domain occupies 9–220 (RFARKVDYLR…DQVRERIAER (212 aa)). R18 is a binding site for GTP. Positions 25 and 29 each coordinate [4Fe-4S] cluster. Y31 contributes to the S-adenosyl-L-methionine binding site. Residue C32 participates in [4Fe-4S] cluster binding. Residue R67 coordinates GTP. G71 is a binding site for S-adenosyl-L-methionine. T98 is a binding site for GTP. S122 is a binding site for S-adenosyl-L-methionine. Position 159 (K159) interacts with GTP. M193 provides a ligand contact to S-adenosyl-L-methionine. The [4Fe-4S] cluster site is built by C258 and C261. 263 to 265 (RVR) lines the GTP pocket. C275 contributes to the [4Fe-4S] cluster binding site.

Belongs to the radical SAM superfamily. MoaA family. Monomer and homodimer. [4Fe-4S] cluster serves as cofactor.

It catalyses the reaction GTP + AH2 + S-adenosyl-L-methionine = (8S)-3',8-cyclo-7,8-dihydroguanosine 5'-triphosphate + 5'-deoxyadenosine + L-methionine + A + H(+). It functions in the pathway cofactor biosynthesis; molybdopterin biosynthesis. Functionally, catalyzes the cyclization of GTP to (8S)-3',8-cyclo-7,8-dihydroguanosine 5'-triphosphate. The protein is GTP 3',8-cyclase of Pseudomonas syringae pv. syringae (strain B728a).